We begin with the raw amino-acid sequence, 438 residues long: Protein translocase subunit SecY (438 aa).

10 helical membrane-spanning segments follow: residues 18-38 (ILFT…PSPG), 76-96 (VGVM…VVIP), 121-141 (IALA…GGLL), 154-174 (IFSL…VMWM), 177-197 (LITE…GIAA), 212-232 (GVIF…VVFV), 269-289 (VIPV…TQLV), 315-335 (PVYI…YVSV), 375-395 (LPGS…LQIG), and 398-418 (GEVQ…GVGL).

It belongs to the SecY/SEC61-alpha family. As to quaternary structure, component of the Sec protein translocase complex. Heterotrimer consisting of SecY, SecE and SecG subunits. The heterotrimers can form oligomers, although 1 heterotrimer is thought to be able to translocate proteins. Interacts with the ribosome. Interacts with SecDF, and other proteins may be involved. Interacts with SecA.

Its subcellular location is the cell membrane. The central subunit of the protein translocation channel SecYEG. Consists of two halves formed by TMs 1-5 and 6-10. These two domains form a lateral gate at the front which open onto the bilayer between TMs 2 and 7, and are clamped together by SecE at the back. The channel is closed by both a pore ring composed of hydrophobic SecY resides and a short helix (helix 2A) on the extracellular side of the membrane which forms a plug. The plug probably moves laterally to allow the channel to open. The ring and the pore may move independently. The sequence is that of Protein translocase subunit SecY from Mycobacterium leprae (strain TN).